We begin with the raw amino-acid sequence, 355 residues long: MPCTWITSDLQLRLILTLFFVAECLSAGMEGTKTSNNSMQQLDNGNHSSVSTTSSTERKQSTVTLYAEVKTSLSVLVDTKAVLTCPPVLWPSVLVVTWEIVLRDKPPCFGAYRRDTNQTTRGNCTDKRITWASRPDENPALQVDPVAITHDGNYTCQIVTSDGNFHHEYHLQVLVPPEVTLIQTEKGTAVCKAAAGKPAAQISWTPEGDCDTEQGPYWGDGTVTVQSTCRWGSRHVLNVSCSVSHLAGNKSLSIQLSQGAEIPAHLKNLYITAPIFIILIVVGSIWLLKISGCRKCKLKKTEHTPVVQEDEMEPYASYTEKNNPLYDITNRVKTSQVLQSEVDGMNLHTIYVPRV.

The signal sequence occupies residues 1–26 (MPCTWITSDLQLRLILTLFFVAECLS). Topologically, residues 27–267 (AGMEGTKTSN…QGAEIPAHLK (241 aa)) are extracellular. The segment covering 35-55 (SNNSMQQLDNGNHSSVSTTSS) has biased composition (polar residues). Residues 35-56 (SNNSMQQLDNGNHSSVSTTSST) are disordered. Asn46, Asn123, and Asn153 each carry an N-linked (GlcNAc...) asparagine glycan. 4 disulfides stabilise this stretch: Cys85/Cys156, Cys108/Cys124, Cys191/Cys241, and Cys210/Cys229. One can recognise an Ig-like C2-type domain in the interval 139–257 (PALQVDPVAI…GNKSLSIQLS (119 aa)). A helical transmembrane segment spans residues 268-288 (NLYITAPIFIILIVVGSIWLL). Over 289 to 355 (KISGCRKCKL…NLHTIYVPRV (67 aa)) the chain is Cytoplasmic.

The protein belongs to the CD200R family. As to quaternary structure, CD200 and CD200R1 interact via their respective N-terminal Ig-like domains.

The protein localises to the cell membrane. In terms of biological role, inhibitory receptor for the CD200/OX2 cell surface glycoprotein. Limits inflammation by inhibiting the expression of pro-inflammatory molecules including TNF-alpha, interferons, and inducible nitric oxide synthase (iNOS) in response to selected stimuli. This Bos taurus (Bovine) protein is Cell surface glycoprotein CD200 receptor 1 (CD200R1).